The following is a 292-amino-acid chain: Homoserine kinase (292 aa).

84–94 (PLSRGLGSSSA) contributes to the ATP binding site.

Belongs to the GHMP kinase family. Homoserine kinase subfamily.

It localises to the cytoplasm. It carries out the reaction L-homoserine + ATP = O-phospho-L-homoserine + ADP + H(+). It participates in amino-acid biosynthesis; L-threonine biosynthesis; L-threonine from L-aspartate: step 4/5. Catalyzes the ATP-dependent phosphorylation of L-homoserine to L-homoserine phosphate. This chain is Homoserine kinase, found in Campylobacter jejuni subsp. jejuni serotype O:2 (strain ATCC 700819 / NCTC 11168).